The chain runs to 363 residues: Trichocyst matrix protein T4-B (363 aa).

An N-terminal signal peptide occupies residues 1-17; the sequence is MARSLTILAIVFAVATA. Residues 18–52 constitute a propeptide that is removed on maturation; that stretch reads RVTKSESPKEILAQVNKDSFGNSILSVLQLQLATG. The stretch at 85–119 forms a coiled coil; that stretch reads VAFEKIIADLEQEIAYHQTQIVALSNLRDSTTEAL. Positions 190–221 are excised as a propeptide; the sequence is RFEKVQAKLMESKHALFKPLINALTQLASKVD. A coiled-coil region spans residues 244–352; that stretch reads ASLLATEERQ…EVLTQKLSAA (109 aa).

It belongs to the TMP family. Two components are produced by post-translational processing from the precursor peptide.

Its subcellular location is the trichocyst. Structural protein that crystallize inside the trichocyst matrix. The polypeptide is Trichocyst matrix protein T4-B (T4B) (Paramecium tetraurelia).